Consider the following 382-residue polypeptide: ATP phosphoribosyltransferase regulatory subunit (382 aa).

This sequence belongs to the class-II aminoacyl-tRNA synthetase family. HisZ subfamily. Heteromultimer composed of HisG and HisZ subunits.

It is found in the cytoplasm. Its pathway is amino-acid biosynthesis; L-histidine biosynthesis; L-histidine from 5-phospho-alpha-D-ribose 1-diphosphate: step 1/9. Functionally, required for the first step of histidine biosynthesis. May allow the feedback regulation of ATP phosphoribosyltransferase activity by histidine. The polypeptide is ATP phosphoribosyltransferase regulatory subunit (Burkholderia lata (strain ATCC 17760 / DSM 23089 / LMG 22485 / NCIMB 9086 / R18194 / 383)).